The following is a 312-amino-acid chain: Malate dehydrogenase (312 aa).

NAD(+)-binding positions include 7–13 (GAAGGIG) and Asp-34. Residues Arg-81 and Arg-87 each coordinate substrate. NAD(+) contacts are provided by residues Asn-94 and 117–119 (ITN). Substrate-binding residues include Asn-119 and Arg-153. His-177 functions as the Proton acceptor in the catalytic mechanism. Residue Met-227 coordinates NAD(+).

This sequence belongs to the LDH/MDH superfamily. MDH type 1 family. Homodimer.

The catalysed reaction is (S)-malate + NAD(+) = oxaloacetate + NADH + H(+). Catalyzes the reversible oxidation of malate to oxaloacetate. In Escherichia coli O7:K1 (strain IAI39 / ExPEC), this protein is Malate dehydrogenase.